The following is a 958-amino-acid chain: Glycine dehydrogenase (decarboxylating) (958 aa).

An N6-(pyridoxal phosphate)lysine modification is found at Lys707.

It belongs to the GcvP family. As to quaternary structure, the glycine cleavage system is composed of four proteins: P, T, L and H. It depends on pyridoxal 5'-phosphate as a cofactor.

The catalysed reaction is N(6)-[(R)-lipoyl]-L-lysyl-[glycine-cleavage complex H protein] + glycine + H(+) = N(6)-[(R)-S(8)-aminomethyldihydrolipoyl]-L-lysyl-[glycine-cleavage complex H protein] + CO2. Its function is as follows. The glycine cleavage system catalyzes the degradation of glycine. The P protein binds the alpha-amino group of glycine through its pyridoxal phosphate cofactor; CO(2) is released and the remaining methylamine moiety is then transferred to the lipoamide cofactor of the H protein. This is Glycine dehydrogenase (decarboxylating) from Stutzerimonas stutzeri (strain A1501) (Pseudomonas stutzeri).